The sequence spans 239 residues: Beta-glucanase (239 aa).

Positions 1 to 25 (MKRVLLILVTGLFMSLCGITSSVSA) are cleaved as a signal peptide. The GH16 domain occupies 26–239 (QTGGSFFEPF…HYDWMRYRKK (214 aa)). Cysteine 57 and cysteine 86 form a disulfide bridge. The active-site Nucleophile is the glutamate 134.

The protein belongs to the glycosyl hydrolase 16 family.

The catalysed reaction is Hydrolysis of (1-&gt;4)-beta-D-glucosidic linkages in beta-D-glucans containing (1-&gt;3)- and (1-&gt;4)-bonds.. This chain is Beta-glucanase (bglA), found in Bacillus amyloliquefaciens (Bacillus velezensis).